The following is a 72-amino-acid chain: MSKEENIEMQGVVIDTLPNTMFRVELENKHIVTAHISGKMRKNYIRILTGDKVTVELTPYDLTKGRIIFRSR.

An S1-like domain is found at M1 to R72.

It belongs to the IF-1 family. Component of the 30S ribosomal translation pre-initiation complex which assembles on the 30S ribosome in the order IF-2 and IF-3, IF-1 and N-formylmethionyl-tRNA(fMet); mRNA recruitment can occur at any time during PIC assembly.

The protein resides in the cytoplasm. One of the essential components for the initiation of protein synthesis. Stabilizes the binding of IF-2 and IF-3 on the 30S subunit to which N-formylmethionyl-tRNA(fMet) subsequently binds. Helps modulate mRNA selection, yielding the 30S pre-initiation complex (PIC). Upon addition of the 50S ribosomal subunit IF-1, IF-2 and IF-3 are released leaving the mature 70S translation initiation complex. This is Translation initiation factor IF-1 from Buchnera aphidicola subsp. Acyrthosiphon pisum (strain APS) (Acyrthosiphon pisum symbiotic bacterium).